The following is a 181-amino-acid chain: Inner membrane-spanning protein YciB (181 aa).

5 helical membrane-spanning segments follow: residues 10 to 30, 50 to 70, 80 to 100, 120 to 140, and 148 to 168; these read LIIFFALYKFYDIYVATGALI, MQLITFVMVALFGGMTLALHD, IVYVVFALGLTISQIMGKPAI, WAWVMFFSGCAALNLYVAYHL, and FKVFGLLAATFVFTLLTGGYI.

The protein belongs to the YciB family.

The protein resides in the cell inner membrane. Functionally, plays a role in cell envelope biogenesis, maintenance of cell envelope integrity and membrane homeostasis. In Vibrio cholerae serotype O1 (strain ATCC 39541 / Classical Ogawa 395 / O395), this protein is Inner membrane-spanning protein YciB.